The primary structure comprises 547 residues: CTP synthase (547 aa).

Positions 1-273 (MNNKKLKSKF…DHFILNHFQL (273 aa)) are amidoligase domain. A CTP-binding site is contributed by S19. S19 contacts UTP. 20–25 (SLGKGI) lines the ATP pocket. Y60 contacts L-glutamine. D77 contacts ATP. The Mg(2+) site is built by D77 and E147. Residues 154–156 (DIE), 194–199 (KTKPTQ), and K230 contribute to the CTP site. Residues 194–199 (KTKPTQ) and K230 each bind UTP. The Glutamine amidotransferase type-1 domain occupies 306–539 (YVILHDAYLS…VEAALLKNGK (234 aa)). Position 361 (G361) interacts with L-glutamine. The Nucleophile; for glutamine hydrolysis role is filled by C388. Residues 389–392 (FGMQ), E412, and R466 each bind L-glutamine. Catalysis depends on residues H512 and E514.

This sequence belongs to the CTP synthase family. As to quaternary structure, homotetramer.

It carries out the reaction UTP + L-glutamine + ATP + H2O = CTP + L-glutamate + ADP + phosphate + 2 H(+). The catalysed reaction is L-glutamine + H2O = L-glutamate + NH4(+). The enzyme catalyses UTP + NH4(+) + ATP = CTP + ADP + phosphate + 2 H(+). The protein operates within pyrimidine metabolism; CTP biosynthesis via de novo pathway; CTP from UDP: step 2/2. Allosterically activated by GTP, when glutamine is the substrate; GTP has no effect on the reaction when ammonia is the substrate. The allosteric effector GTP functions by stabilizing the protein conformation that binds the tetrahedral intermediate(s) formed during glutamine hydrolysis. Inhibited by the product CTP, via allosteric rather than competitive inhibition. Its function is as follows. Catalyzes the ATP-dependent amination of UTP to CTP with either L-glutamine or ammonia as the source of nitrogen. Regulates intracellular CTP levels through interactions with the four ribonucleotide triphosphates. The polypeptide is CTP synthase (Phytoplasma australiense).